The chain runs to 342 residues: uncharacterized protein (342 aa).

A signal peptide spans 1 to 18 (MWKKLMLLLLMAIPLVSA).

This is an uncharacterized protein from Methanocaldococcus jannaschii (strain ATCC 43067 / DSM 2661 / JAL-1 / JCM 10045 / NBRC 100440) (Methanococcus jannaschii).